We begin with the raw amino-acid sequence, 905 residues long: Tight junction protein ZO-3 (905 aa).

The region spanning Thr-11 to Arg-93 is the PDZ 1 domain. Positions Pro-92–Asp-167 are disordered. Phosphoserine occurs at positions 111 and 128. Residues Gly-124–Ser-133 show a composition bias toward low complexity. Positions Arg-139 to Arg-155 are enriched in basic residues. Residues Ser-156, Ser-157, Ser-161, Ser-195, and Ser-311 each carry the phosphoserine modification. The PDZ 2 domain occupies Ser-187–Ser-264. The tract at residues Leu-289–Pro-367 is disordered. Thr-317 carries the post-translational modification Phosphothreonine. 3 positions are modified to phosphoserine: Ser-319, Ser-343, and Ser-359. Residues Asp-368–Leu-434 form the PDZ 3 domain. The 78-residue stretch at Gly-464–Ala-541 folds into the SH3 domain. The 182-residue stretch at Arg-573 to Gln-754 folds into the Guanylate kinase-like domain. At Ser-584 the chain carries Phosphoserine. Disordered regions lie at residues Glu-773 to Val-818 and Thr-850 to Leu-905. The segment covering Asp-851–Glu-877 has biased composition (basic and acidic residues). Phosphoserine is present on residues Ser-891 and Ser-892.

This sequence belongs to the MAGUK family. As to quaternary structure, interacts with occludin OCLN, claudins and TPJ1. Interacts with PATJ. Interacts with UBN1. Interacts with FASLG. Interacts with CCND1. Phosphorylated. In terms of tissue distribution, is concentrated in various types of epithelium, in tissues such as the lung, liver and kidney, but not in endothelium or at cadherin-based cell-cell adhesion sites.

It is found in the cell membrane. The protein localises to the cell junction. The protein resides in the tight junction. Its subcellular location is the nucleus. Functionally, tjp1, Tjp2, and Tjp3 are closely related scaffolding proteins that link tight junction (TJ) transmembrane proteins such as claudins, junctional adhesion molecules, and occludin to the actin cytoskeleton. The tight junction acts to limit movement of substances through the paracellular space and as a boundary between the compositionally distinct apical and basolateral plasma membrane domains of epithelial and endothelial cells. Binds and recruits PatJ to tight junctions where it connects and stabilizes apical and lateral components of tight junctions. Promotes cell-cycle progression through the sequestration of cyclin D1 (Ccnd1) at tight junctions during mitosis which prevents Ccnd1 degradation during M-phase and enables S-phase transition. With Tjp1 and Tjp2, participates in the junctional retention and stability of the transcription factor DbpA, but is not involved in its shuttling to the nucleus. Contrary to Tjp2, Tjp3 is dispensable for individual viability, embryonic development, epithelial differentiation, and the establishment of TJs, at least in the laboratory environment. The sequence is that of Tight junction protein ZO-3 (Tjp3) from Mus musculus (Mouse).